Reading from the N-terminus, the 211-residue chain is Imidazole glycerol phosphate synthase subunit HisH (211 aa).

The Glutamine amidotransferase type-1 domain maps to 4 to 211 (RVVILDYGSG…QLLANWVATL (208 aa)). Cys82 serves as the catalytic Nucleophile. Catalysis depends on residues His192 and Glu194.

As to quaternary structure, heterodimer of HisH and HisF.

The protein localises to the cytoplasm. The catalysed reaction is 5-[(5-phospho-1-deoxy-D-ribulos-1-ylimino)methylamino]-1-(5-phospho-beta-D-ribosyl)imidazole-4-carboxamide + L-glutamine = D-erythro-1-(imidazol-4-yl)glycerol 3-phosphate + 5-amino-1-(5-phospho-beta-D-ribosyl)imidazole-4-carboxamide + L-glutamate + H(+). It catalyses the reaction L-glutamine + H2O = L-glutamate + NH4(+). It participates in amino-acid biosynthesis; L-histidine biosynthesis; L-histidine from 5-phospho-alpha-D-ribose 1-diphosphate: step 5/9. Its function is as follows. IGPS catalyzes the conversion of PRFAR and glutamine to IGP, AICAR and glutamate. The HisH subunit catalyzes the hydrolysis of glutamine to glutamate and ammonia as part of the synthesis of IGP and AICAR. The resulting ammonia molecule is channeled to the active site of HisF. The chain is Imidazole glycerol phosphate synthase subunit HisH from Thermobifida fusca (strain YX).